The following is a 351-amino-acid chain: Nicotinate-nucleotide--dimethylbenzimidazole phosphoribosyltransferase (351 aa).

Residue E317 is the Proton acceptor of the active site.

It belongs to the CobT family.

The enzyme catalyses 5,6-dimethylbenzimidazole + nicotinate beta-D-ribonucleotide = alpha-ribazole 5'-phosphate + nicotinate + H(+). It functions in the pathway nucleoside biosynthesis; alpha-ribazole biosynthesis; alpha-ribazole from 5,6-dimethylbenzimidazole: step 1/2. Catalyzes the synthesis of alpha-ribazole-5'-phosphate from nicotinate mononucleotide (NAMN) and 5,6-dimethylbenzimidazole (DMB). In Pseudomonas fluorescens (strain ATCC BAA-477 / NRRL B-23932 / Pf-5), this protein is Nicotinate-nucleotide--dimethylbenzimidazole phosphoribosyltransferase.